A 167-amino-acid polypeptide reads, in one-letter code: CGG triplet repeat-binding protein 1 (167 aa).

S56 carries the post-translational modification Phosphoserine. Positions 80–84 (RKKQR) match the Nuclear localization signal motif. At S164 the chain carries Phosphoserine.

In terms of tissue distribution, ubiquitous. Highly expressed in placenta, thymus, lymph nodes, cerebellum and cerebral cortex. Low expression in other regions of the brain.

The protein localises to the nucleus. Its function is as follows. Binds to nonmethylated 5'-d(CGG)(n)-3' trinucleotide repeats in the FMR1 promoter. May play a role in regulating FMR1 promoter. This is CGG triplet repeat-binding protein 1 (CGGBP1) from Homo sapiens (Human).